Here is a 471-residue protein sequence, read N- to C-terminus: Glutamate--tRNA ligase (471 aa).

The 'HIGH' region signature appears at P9–G19. Zn(2+) contacts are provided by C98, C100, C125, and H127. Residues K237–R241 carry the 'KMSKS' region motif. Position 240 (K240) interacts with ATP.

Belongs to the class-I aminoacyl-tRNA synthetase family. Glutamate--tRNA ligase type 1 subfamily. As to quaternary structure, monomer. It depends on Zn(2+) as a cofactor.

The protein localises to the cytoplasm. The enzyme catalyses tRNA(Glu) + L-glutamate + ATP = L-glutamyl-tRNA(Glu) + AMP + diphosphate. Its function is as follows. Catalyzes the attachment of glutamate to tRNA(Glu) in a two-step reaction: glutamate is first activated by ATP to form Glu-AMP and then transferred to the acceptor end of tRNA(Glu). The protein is Glutamate--tRNA ligase of Escherichia coli O6:K15:H31 (strain 536 / UPEC).